A 195-amino-acid chain; its full sequence is Ephrin-A2 (195 aa).

The signal sequence occupies residues 1-16 (MELSLVVFTVVCWVSV). Residues 24 to 157 (SDRHAVYWNS…KLKVYVKPTS (134 aa)) enclose the Ephrin RBD domain. N-linked (GlcNAc...) asparagine glycosylation is present at Asn32. 2 disulfide bridges follow: Cys57–Cys97 and Cys85–Cys146. Cys174 is lipidated: GPI-anchor amidated cysteine. A propeptide spans 175-195 (GADGPCLAVLMLLLVFLLAGV) (removed in mature form).

This sequence belongs to the ephrin family. Binds to the receptor tyrosine kinases epha2, epha3, epha4 and epha5. Interacts with epha8; activates epha8. As to expression, widespread expression in the embryo.

It is found in the cell membrane. Cell surface GPI-bound ligand for Eph receptors, a family of receptor tyrosine kinases which are crucial for migration, repulsion and adhesion during neuronal, vascular and epithelial development. Binds promiscuously Eph receptors residing on adjacent cells, leading to contact-dependent bidirectional signaling into neighboring cells. The signaling pathway downstream of the receptor is referred to as forward signaling while the signaling pathway downstream of the ephrin ligand is referred to as reverse signaling. With the epha2 receptor may play a role in bone remodeling through regulation of osteoclastogenesis and osteoblastogenesis. In Danio rerio (Zebrafish), this protein is Ephrin-A2 (efna2).